The primary structure comprises 284 residues: Protoheme IX farnesyltransferase (284 aa).

Helical transmembrane passes span 13 to 33, 35 to 55, 87 to 107, 108 to 128, 133 to 153, 162 to 182, 224 to 244, and 264 to 284; these read IIIGNIILIIGSFLFSSFPFF, VFLFFFTILGTSLVIASSCIF, IFASFIGIVGFFILGLFVNIL, SMFLSFIGFVIYVFFYTFFLK, YSTFIGSFSGSIPSVIGHTAI, FLLFIIFIFWQMSHFYAIAIL, FLGYLSYIFLLFFSFFSFYWL, and FYYSIAVVILFNFLISIDFIF.

This sequence belongs to the UbiA prenyltransferase family. Protoheme IX farnesyltransferase subfamily.

Its subcellular location is the cell membrane. It carries out the reaction heme b + (2E,6E)-farnesyl diphosphate + H2O = Fe(II)-heme o + diphosphate. The protein operates within porphyrin-containing compound metabolism; heme O biosynthesis; heme O from protoheme: step 1/1. Functionally, converts heme B (protoheme IX) to heme O by substitution of the vinyl group on carbon 2 of heme B porphyrin ring with a hydroxyethyl farnesyl side group. The chain is Protoheme IX farnesyltransferase from Buchnera aphidicola subsp. Schizaphis graminum (strain Sg).